Here is a 212-residue protein sequence, read N- to C-terminus: FMN-dependent NADH:quinone oxidoreductase (212 aa).

FMN is bound by residues Ser10, 16 to 18 (SFS), and 98 to 101 (MWNF).

It belongs to the azoreductase type 1 family. Homodimer. FMN is required as a cofactor.

The catalysed reaction is 2 a quinone + NADH + H(+) = 2 a 1,4-benzosemiquinone + NAD(+). It catalyses the reaction N,N-dimethyl-1,4-phenylenediamine + anthranilate + 2 NAD(+) = 2-(4-dimethylaminophenyl)diazenylbenzoate + 2 NADH + 2 H(+). In terms of biological role, quinone reductase that provides resistance to thiol-specific stress caused by electrophilic quinones. Functionally, also exhibits azoreductase activity. Catalyzes the reductive cleavage of the azo bond in aromatic azo compounds to the corresponding amines. This is FMN-dependent NADH:quinone oxidoreductase from Desulfotalea psychrophila (strain LSv54 / DSM 12343).